Reading from the N-terminus, the 427-residue chain is Ribosomal protein uS12 methylthiotransferase RimO (427 aa).

Positions 1–116 (MNFYVDVLGC…IAENIGKESI (116 aa)) constitute an MTTase N-terminal domain. Residues Cys10, Cys46, Cys79, Cys145, Cys149, and Cys152 each contribute to the [4Fe-4S] cluster site. The Radical SAM core domain maps to 131–360 (VDEKQYAYVK…MEEQSKISFE (230 aa)). The 64-residue stretch at 363 to 426 (EKMVGKTFKV…VYDLEGKIVE (64 aa)) folds into the TRAM domain.

Belongs to the methylthiotransferase family. RimO subfamily. It depends on [4Fe-4S] cluster as a cofactor.

It is found in the cytoplasm. It catalyses the reaction L-aspartate(89)-[ribosomal protein uS12]-hydrogen + (sulfur carrier)-SH + AH2 + 2 S-adenosyl-L-methionine = 3-methylsulfanyl-L-aspartate(89)-[ribosomal protein uS12]-hydrogen + (sulfur carrier)-H + 5'-deoxyadenosine + L-methionine + A + S-adenosyl-L-homocysteine + 2 H(+). Functionally, catalyzes the methylthiolation of an aspartic acid residue of ribosomal protein uS12. In Thermosipho africanus (strain TCF52B), this protein is Ribosomal protein uS12 methylthiotransferase RimO.